The sequence spans 313 residues: tRNA-cytidine(32) 2-sulfurtransferase (313 aa).

The short motif at 47 to 52 is the PP-loop motif element; the sequence is SGGKDS. [4Fe-4S] cluster is bound by residues C122, C125, and C213. The tract at residues 288–313 is disordered; it reads PVGWQPEDDEDTEKRPPVRLDVLEIK. The span at 299-313 shows a compositional bias: basic and acidic residues; sequence TEKRPPVRLDVLEIK.

The protein belongs to the TtcA family. In terms of assembly, homodimer. Requires Mg(2+) as cofactor. [4Fe-4S] cluster serves as cofactor.

It is found in the cytoplasm. It carries out the reaction cytidine(32) in tRNA + S-sulfanyl-L-cysteinyl-[cysteine desulfurase] + AH2 + ATP = 2-thiocytidine(32) in tRNA + L-cysteinyl-[cysteine desulfurase] + A + AMP + diphosphate + H(+). Its pathway is tRNA modification. Its function is as follows. Catalyzes the ATP-dependent 2-thiolation of cytidine in position 32 of tRNA, to form 2-thiocytidine (s(2)C32). The sulfur atoms are provided by the cysteine/cysteine desulfurase (IscS) system. This is tRNA-cytidine(32) 2-sulfurtransferase from Yersinia pseudotuberculosis serotype O:1b (strain IP 31758).